Consider the following 429-residue polypeptide: Serine--tRNA ligase (429 aa).

Residue 236 to 238 coordinates L-serine; it reads TAE. 267–269 provides a ligand contact to ATP; sequence RSE. Residue Glu290 coordinates L-serine. An ATP-binding site is contributed by 354–357; it reads EISS. Ser390 provides a ligand contact to L-serine.

This sequence belongs to the class-II aminoacyl-tRNA synthetase family. Type-1 seryl-tRNA synthetase subfamily. In terms of assembly, homodimer. The tRNA molecule binds across the dimer.

The protein resides in the cytoplasm. The catalysed reaction is tRNA(Ser) + L-serine + ATP = L-seryl-tRNA(Ser) + AMP + diphosphate + H(+). It carries out the reaction tRNA(Sec) + L-serine + ATP = L-seryl-tRNA(Sec) + AMP + diphosphate + H(+). The protein operates within aminoacyl-tRNA biosynthesis; selenocysteinyl-tRNA(Sec) biosynthesis; L-seryl-tRNA(Sec) from L-serine and tRNA(Sec): step 1/1. In terms of biological role, catalyzes the attachment of serine to tRNA(Ser). Is also able to aminoacylate tRNA(Sec) with serine, to form the misacylated tRNA L-seryl-tRNA(Sec), which will be further converted into selenocysteinyl-tRNA(Sec). In Alcanivorax borkumensis (strain ATCC 700651 / DSM 11573 / NCIMB 13689 / SK2), this protein is Serine--tRNA ligase.